The primary structure comprises 441 residues: UBX domain-containing protein 6 (441 aa).

The tract at residues 1 to 10 (MKKFFQEIKA) is mediates interaction with LMAN1. Disordered regions lie at residues 12-57 (IKFK…MAAA), 62-81 (RLEQ…SIRN), and 86-113 (ELRA…EEGS). Residues 27–36 (VGEKAPKEKP) are compositionally biased toward basic and acidic residues. The interval 51–63 (EAQMAAAAALARL) is VCP/p97-interacting motif (VIM). Residues 175–244 (VDTIAKYLDN…GPEEFYVLSE (70 aa)) form the PUB domain. One can recognise a UBX domain in the interval 332–408 (RKYTYTLLRV…GLVPSALLTF (77 aa)).

As to quaternary structure, interacts with VCP through the PUB domain (via C-terminus) and VIM motif (via N-terminus); the interaction is direct. Forms a ternary complex with CAV1 and VCP. Interacts with SYVN1. Interacts with HERPUD1. Interacts with VCPKMT. May interact with DERL1. Interacts with PLAA, VCP and YOD1; may form a complex involved in macroautophagy. Interacts with LMAN1.

Its subcellular location is the cytoplasm. The protein resides in the cytosol. It is found in the membrane. It localises to the nucleus. The protein localises to the cytoskeleton. Its subcellular location is the microtubule organizing center. The protein resides in the centrosome. It is found in the early endosome membrane. It localises to the late endosome membrane. The protein localises to the lysosome membrane. May negatively regulate the ATPase activity of VCP, an ATP-driven segregase that associates with different cofactors to control a wide variety of cellular processes. As a cofactor of VCP, it may play a role in the transport of CAV1 to lysosomes for degradation. It may also play a role in endoplasmic reticulum-associated degradation (ERAD) of misfolded proteins. Together with VCP and other cofactors, it may play a role in macroautophagy, regulating for instance the clearance of damaged lysosomes. The protein is UBX domain-containing protein 6 of Bos taurus (Bovine).